Consider the following 642-residue polypeptide: Phosphomethylpyrimidine synthase (642 aa).

Substrate contacts are provided by residues Asn-235, Met-264, Tyr-293, His-329, 349 to 351 (SRG), 390 to 393 (DGLR), and Glu-429. Position 433 (His-433) interacts with Zn(2+). Position 456 (Tyr-456) interacts with substrate. A Zn(2+)-binding site is contributed by His-497. Residues Cys-577, Cys-580, and Cys-585 each coordinate [4Fe-4S] cluster.

Belongs to the ThiC family. Homodimer. [4Fe-4S] cluster is required as a cofactor.

It carries out the reaction 5-amino-1-(5-phospho-beta-D-ribosyl)imidazole + S-adenosyl-L-methionine = 4-amino-2-methyl-5-(phosphooxymethyl)pyrimidine + CO + 5'-deoxyadenosine + formate + L-methionine + 3 H(+). It functions in the pathway cofactor biosynthesis; thiamine diphosphate biosynthesis. Catalyzes the synthesis of the hydroxymethylpyrimidine phosphate (HMP-P) moiety of thiamine from aminoimidazole ribotide (AIR) in a radical S-adenosyl-L-methionine (SAM)-dependent reaction. In Alteromonas mediterranea (strain DSM 17117 / CIP 110805 / LMG 28347 / Deep ecotype), this protein is Phosphomethylpyrimidine synthase.